Consider the following 103-residue polypeptide: PTS system lactose-specific EIIA component (103 aa).

The 102-residue stretch at 1–102 (MNREEVQLLG…MKHLLEFYKR (102 aa)) folds into the PTS EIIA type-3 domain. Histidine 78 (tele-phosphohistidine intermediate) is an active-site residue. The residue at position 78 (histidine 78) is a Phosphohistidine; by HPr. Aspartate 81 contributes to the Mg(2+) binding site.

As to quaternary structure, homotrimer. The cofactor is Mg(2+).

The protein localises to the cytoplasm. In terms of biological role, the phosphoenolpyruvate-dependent sugar phosphotransferase system (sugar PTS), a major carbohydrate active transport system, catalyzes the phosphorylation of incoming sugar substrates concomitantly with their translocation across the cell membrane. The enzyme II LacEF PTS system is involved in lactose transport. This Staphylococcus aureus (strain COL) protein is PTS system lactose-specific EIIA component.